Here is a 295-residue protein sequence, read N- to C-terminus: UDP-N-acetylenolpyruvoylglucosamine reductase (295 aa).

An FAD-binding PCMH-type domain is found at 23 to 188 (KVGGPADFLA…ISAKFALKPG (166 aa)). Arg-167 is an active-site residue. Catalysis depends on Ser-217, which acts as the Proton donor. Glu-287 is a catalytic residue.

Belongs to the MurB family. Requires FAD as cofactor.

Its subcellular location is the cytoplasm. It carries out the reaction UDP-N-acetyl-alpha-D-muramate + NADP(+) = UDP-N-acetyl-3-O-(1-carboxyvinyl)-alpha-D-glucosamine + NADPH + H(+). It participates in cell wall biogenesis; peptidoglycan biosynthesis. Cell wall formation. This Streptococcus pyogenes serotype M18 (strain MGAS8232) protein is UDP-N-acetylenolpyruvoylglucosamine reductase.